Reading from the N-terminus, the 352-residue chain is Heat-inducible transcription repressor HrcA (352 aa).

It belongs to the HrcA family.

In terms of biological role, negative regulator of class I heat shock genes (grpE-dnaK-dnaJ and groELS operons). Prevents heat-shock induction of these operons. The protein is Heat-inducible transcription repressor HrcA of Chlorobium phaeobacteroides (strain BS1).